Here is a 592-residue protein sequence, read N- to C-terminus: Hepatocyte nuclear factor 1-alpha-B (592 aa).

The dimerization stretch occupies residues 1 to 31 (MASQLSYLQQELLRALLESGVTKEALKKALA). Positions 1 to 32 (MASQLSYLQQELLRALLESGVTKEALKKALAD) constitute an HNF-p1 domain. The interval 54 to 78 (NCVQLPNGLGEPQMSEDESSDDGGD) is disordered. Over residues 67–77 (MSEDESSDDGG) the composition is skewed to acidic residues. The region spanning 85–180 (KELERLSPEE…IARQFTHAGH (96 aa)) is the POU-specific atypical domain. 6 interaction with DNA regions span residues 128-130 (QRE), 141-147 (HLSQHLN), 153-156 (KTQK), 201-204 (RFKW), 261-263 (RVY), and 268-271 (NSGK). The short motif at 195–203 (KKMRRNRFK) is the Nuclear localization signal element. The segment at residues 197–277 (MRRNRFKWGP…NSGKEEAFRH (81 aa)) is a DNA-binding region (homeobox; HNF1-type). Composition is skewed to polar residues over residues 284–295 (YNGQQSSAQPLS) and 306–328 (RYTQDSSTDRSAAMANSQSTLSP). 2 disordered regions span residues 284-329 (YNGQ…LSPS) and 511-533 (KQVVSHHPTAHGDSPGSQLHNQD).

Belongs to the HNF1 homeobox family. Binds DNA as dimer. Forms a homodimer or heterodimer with HNF1-alpha-A. Potentially also form a heterodimer with HNF1-beta. Liver.

The protein localises to the nucleus. In terms of biological role, transcriptional activator that regulates the tissue specific expression of multiple genes, especially in pancreas and liver. Binds to the hepatocyte specific promoter element HP1. Binds to the inverted palindrome 5'-GTTAATNATTAAC-3'. In Xenopus laevis (African clawed frog), this protein is Hepatocyte nuclear factor 1-alpha-B (hnf1a-b).